Here is a 520-residue protein sequence, read N- to C-terminus: Hydroxymethylglutaryl-CoA synthase, cytoplasmic (520 aa).

Position 4 is a phosphoserine (S4). Residue A44 coordinates (3S)-3-hydroxy-3-methylglutaryl-CoA. Position 44–46 (A44–K46) interacts with CoA. The residue at position 46 (K46) is an N6-acetyllysine. Residue E95 is the Proton donor/acceptor of the active site. (3S)-3-hydroxy-3-methylglutaryl-CoA contacts are provided by C129, N167, T171, S221, and H264. C129 functions as the Acyl-thioester intermediate in the catalytic mechanism. CoA is bound at residue N167. A CoA-binding site is contributed by S221. H264 functions as the Proton donor/acceptor in the catalytic mechanism. K269 and K273 together coordinate CoA. K273, N343, and S377 together coordinate (3S)-3-hydroxy-3-methylglutaryl-CoA. K273 is subject to N6-acetyllysine. T476 bears the Phosphothreonine mark. The tract at residues H492–H520 is disordered. Residues S495 and S516 each carry the phosphoserine modification.

Belongs to the thiolase-like superfamily. HMG-CoA synthase family. Homodimer.

The protein localises to the cytoplasm. It carries out the reaction acetoacetyl-CoA + acetyl-CoA + H2O = (3S)-3-hydroxy-3-methylglutaryl-CoA + CoA + H(+). It functions in the pathway metabolic intermediate biosynthesis; (R)-mevalonate biosynthesis; (R)-mevalonate from acetyl-CoA: step 2/3. Its function is as follows. Catalyzes the condensation of acetyl-CoA with acetoacetyl-CoA to form HMG-CoA, which is converted by HMG-CoA reductase (HMGCR) into mevalonate, a precursor for cholesterol synthesis. The polypeptide is Hydroxymethylglutaryl-CoA synthase, cytoplasmic (Pongo abelii (Sumatran orangutan)).